The following is a 522-amino-acid chain: BTB/POZ domain-containing protein 3 (522 aa).

The interval 25 to 44 is disordered; sequence RSKKSSKKANTSSSSSNSSK. Low complexity predominate over residues 32 to 44; the sequence is KANTSSSSSNSSK. Positions 120 to 190 constitute a BTB domain; it reads ADVHFVVGPP…IYCDEIDLAA (71 aa). The BACK domain occupies 235–300; the sequence is FEEPDLTQRC…NWAEVECQRQ (66 aa).

It localises to the cytoplasm. Its subcellular location is the cytosol. The protein resides in the nucleus. Functionally, acts as a key regulator of dendritic field orientation during development of sensory cortex. Also directs dendrites toward active axon terminals when ectopically expressed. The protein is BTB/POZ domain-containing protein 3 (BTBD3) of Homo sapiens (Human).